Reading from the N-terminus, the 538-residue chain is Cytochrome c-552 (538 aa).

Residues 1–55 (MKIYLRFVWILIIILNFLLNLFITTNGVIIVNAFKKSLIVAASFASLSLFNSATA) form the signal peptide. H133 provides a ligand contact to heme c. Heme contacts are provided by C161, C164, and K165. C199, C202, H203, C264, C267, and H268 together coordinate heme c. Ca(2+)-binding residues include E270, Y271, K316, and Q318. A substrate-binding site is contributed by Y271. H319 is a binding site for substrate. The heme c site is built by H330, C337, C340, H341, H356, C369, C372, H373, and H448.

The protein belongs to the cytochrome c-552 family. Ca(2+) is required as a cofactor. Heme c serves as cofactor.

The protein localises to the periplasm. The catalysed reaction is 6 Fe(III)-[cytochrome c] + NH4(+) + 2 H2O = 6 Fe(II)-[cytochrome c] + nitrite + 8 H(+). The protein operates within nitrogen metabolism; nitrate reduction (assimilation). Its function is as follows. Catalyzes the reduction of nitrite to ammonia, consuming six electrons in the process. This is Cytochrome c-552 from Haemophilus influenzae (strain 86-028NP).